The following is a 150-amino-acid chain: Galactose-binding lectin (150 aa).

2 residues coordinate D-galactose: H16 and G19. N26 carries an N-linked (GlcNAc...) asparagine glycan. D-galactose contacts are provided by residues N27, 35–37 (DIH), H64, and G67. An N-linked (GlcNAc...) asparagine glycan is attached at N74. D-galactose-binding positions include E75, 83–85 (DRH), H108, and G111. Residue N118 is glycosylated (N-linked (GlcNAc...) asparagine). Residues N119 and 127-129 (DKH) each bind D-galactose.

In terms of assembly, monomer in solution. Homodimer in solution. Exists as a monomer in solution when a low concentration (0.001 mg/ml) of it is present. Homodimers start to appear at a concentration of 0.01 mg/ml and tetramers at a concentration of 0.1 mg/ml. In terms of tissue distribution, highly expressed in mantle and to a lesser extent in muscle, hepatopancreas, gill and hemocytes.

With respect to regulation, bacterial binding activity is inhibited by D-galactose. Hemagglutinating activity is independent of divalent cations Ca2(+) or Mg2(+). It is strongly inhibited by N-acetyl-D-galactosamine (GalNAc), D-galactose and D-talose, and to a lesser extent by melibiose and raffinose. Also inhibited by glycoprotein asialo-bovine submaxillary mucin (BSM). Not inhibited by D-glucose, D-fucose, D-galactitol, N-acetyl-D-glucosamine or lactose. Fungal binding activity is inhibited by D-galactose. Cytotoxic activity against Raji cell line is completely inhibited by galactose, melibiose and raffinose, but not by glucose or lactose. Galactose inhibits binding to laminin and BSM, but not to collagen, gelatin or fibronectin. Functionally, galactose-binding lectin. Binds both alpha and beta anomer of galactose (Gal), but has a stronger interaction with the glycans having alpha Gal at the non-reducing end and binds beta Gal weakly only in highly branched glycans. Has high affinity to Galalpha1-4Galbeta1-4GlcNAc. Binds N-acetyl-2-deoxy-2-amino-galactose (2-deoxy-GalNAc). Binds N-acetylgalactosamine (GalNAc). Binds porcine stomach mucin (PSM) with high affinity. Binds galactosamine. Binds laminin, bovine submaxillary mucin (BSM), fibronectin, type I collagen and gelatin with a decreasing affinity, respectively. Has hemagglutinating activity towards human type A erythrocytes. Also hemagglutinates human type 0, B and AB erythrocytes as well as rabbit and mouse erythrocytes. Agglutinates both Gram-positive and Gram-negative bacteria including B.subtilis ATCC 6633, S.aureus ATCC 21027 and E.coli 3254, respectively. No agglutination activity towards Gram-positive S.amurskyense CMM 3673. Has bacteriostatic activity on S.amurskyense CMM 3673, B.subtilis ATCC 6633, S.aureus ATCC 21027 and E.coli 3254. However, has no agglutination nor bacteriostatic activity on Gram-negative C.scophthalmum CIP 104199 or A.troitsensis KMM 3674. Inhibits growth of fungi from the genera Aspergillus, Penicillium, Trichoderma and st. Mycelia. Inhibits germination of spores and hyphal growth of them. Has dose-dependent cytotoxic effect on the human globotriaosylceramide (Gb3)-expressing Burkitt's lymphoma (Raji) cell line. Binds to Gb3 in these cells leading to activation of caspase-9/3 and PARP. Has dose-dependent cytotoxic effect on the Gb3-expressing human MCF-7 breast cancer cell line. No cytotoxic effect on myelogenous leukemia K562 cell line, which does not express Gb3. Activates immune responses in mice and increases cytokine production of TNF-alpha, IL-6 and MCP-1 in the serum and the peritoneal lavage of mice. Induces TNF-alpha and IL-6 secretion in mouse RAW264.7 macrophages, mouse bone marrow-derived macrophages, human THP-1 macrophages, human peripheral blood mononuclear cells (PBMCs) and human blood monocyte-derived macrophages. TNF-alpha production in macrophages could not be inhibited by GalNAc, GalN or Gal, indicating that induced cytokine production is separate from its sugar binding activity. Increases intracellular reactive oxygen species levels, expression and phosphorylation of protein kinases PKC alpha/delta, expression of COX-2 and NF-kappaB, and activates the MAPK pathway by increasing the phosphorylation of ERK1/2, JNK1/2 and p38 in mouse RAW264.7 macrophages. Induces endotoxin tolerance in lipopolysaccharide(LPS)-activated macrophages by down-regulating IRAK2 expression, reducing JNK1/2 phosphorylation and NF-kappaB activation. Can slightly increase the bactericidal activity of RAW264.7 macrophages. Has DNA-binding activity. Recognizes pathogen-associated molecular patterns (PAMPs) and binds to LPS from E.coli, but has only little binding to beta-1,3-glucan from E.gracilis and peptidoglycan from S.aureus. Activates secretion of TNF-alpha and IFN-gamma by the human peripheral blood cells (HPBCs). May be involved in innate immunity acting as an antibacterial and antifungal agent involved in the recognition and clearance of pathogens. The sequence is that of Galactose-binding lectin from Crenomytilus grayanus (Gray mussel).